We begin with the raw amino-acid sequence, 38 residues long: Natriuretic peptide DNP (38 aa).

Cysteines 7 and 23 form a disulfide. The tract at residues 19-38 (SNLGCPSLRDPRPNAPSTSA) is disordered.

This sequence belongs to the natriuretic peptide family. Expressed by the venom gland.

Its subcellular location is the secreted. Its function is as follows. Exhibits vasodilator, natriuretic and diuretic properties in animal models and human tissues. Acts by stimulating cGMP via the natriuretic peptide receptor 1 (NPR1). Is a poor agonist of the atrial natriuretic peptide receptor 2 (NPR2). Is not degraded by neutral endopeptidase (NEP/MME). Binds to atrial natriuretic peptide clearance receptor (NPR-C/NPR3), which may be responsible of the removal of DNP from the circulation. Increases calcium uptake and induces histamine release from rat peritoneal mast cells. Increases calcium-activated potassium (KCa) current in gastric antral circular smooth muscle cells by increasing cGMP production and activating inositol trisphosphate receptors (IP3Rs). In vivo, reduces both systolic and diastolic blood pressure with no effect on heart rate, when intravenously injected in conscious rabbits. This is Natriuretic peptide DNP from Dendroaspis angusticeps (Eastern green mamba).